The chain runs to 745 residues: Immunoglobulin superfamily containing leucine-rich repeat protein 2 (745 aa).

The N-terminal stretch at 1–18 is a signal peptide; sequence MFPLRALWLVWALLGVAG. An LRRNT domain is found at 19 to 51; sequence SCPEPCACVDKYAHQFADCAYKELREVPEGLPA. Over 19-589 the chain is Extracellular; that stretch reads SCPEPCACVD…VFSTKKELPS (571 aa). Asn-52 carries N-linked (GlcNAc...) asparagine glycosylation. LRR repeat units lie at residues 52–73, 76–97, 100–123, 124–145, and 148–169; these read NVTT…AFAD, QVTS…ALAV, QLKN…RNLS, ALQL…ALGA, and DLRS…TFDA. A glycan (N-linked (GlcNAc...) asparagine) is linked at Asn-121. Residues 181–232 enclose the LRRCT domain; the sequence is NPFHCGCGLVWLQAWAASTRVSLPEPDSIACASPPALQGVPVYRLPALPCAP. The region spanning 233–371 is the Ig-like domain; it reads PSVHLSAEPP…GANSTSIRVA (139 aa). The cysteines at positions 260 and 355 are disulfide-linked. Residues 287–326 are disordered; sequence VLSGEDDGVGAEEGEGEGDGDLLTQTQAQTPTPAPAWPAP. Residues 290 to 306 are compositionally biased toward acidic residues; the sequence is GEDDGVGAEEGEGEGDG. N-linked (GlcNAc...) asparagine glycans are attached at residues Asn-337 and Asn-364. The disordered stretch occupies residues 375–466; sequence TGPPKHAPGA…QRCGNGDPSR (92 aa). A compositionally biased stretch (acidic residues) spans 431–449; the sequence is TETEPEEDTSEGEEAEDQI. N-linked (GlcNAc...) asparagine glycans are attached at residues Asn-474 and Asn-563. The helical transmembrane segment at 590–610 threads the bilayer; that stretch reads LLVIVAVSVFLLVLATVPLLG. Residues 611–745 are Cytoplasmic-facing; the sequence is AACCHLLAKH…INGNYRQTAG (135 aa). The segment at 656–722 is disordered; that stretch reads KSYPAGGEAG…FEAGSEYSDR (67 aa). Residues 665–683 show a composition bias toward acidic residues; the sequence is GGEEPEDVQGEGLDEDAEQ. Residue Tyr-719 is modified to Phosphotyrosine. Ser-720 carries the phosphoserine modification.

As to quaternary structure, homomultimer. Interacts with NTRK1/TrkA.

The protein localises to the cell membrane. Its function is as follows. Required for axon extension during neural development. The protein is Immunoglobulin superfamily containing leucine-rich repeat protein 2 (ISLR2) of Homo sapiens (Human).